A 783-amino-acid polypeptide reads, in one-letter code: MQALVMLLATGATYYLGLLAAAAAAVNPGRPNTPGSLPAHRRQKRDWIWNQMHIDEERNDSLPHYVGKIKSSVDPKKTEYQLRGESAGKVFRVDKNTGDVYALERLDREKISEYHLTALVVDKDSKKNLESPSSFTIKVHDVNDNWPVFTHRVFNASVPEMSGIGTSVIQVTAMDADDPTVADHASVVYQLTKGKENFDIRGSGLIVTMNKHLDRETQDKYEVVVKAEDAQGRRGESGTATVFITLQDVNDNFPIFTQNRYTFSVPEDIRVGSPLGSLFVEDPDEPQNRKTKYSFVQGEYRDTFTIDTDPSHNEGIIKPIKPLDYERIRQYSFTIEATDPTIDLRYLGSTSPKNIARVIINVTDVDEPPIFQQPFYHFQLQENQKKPLIGSVLAKDPDAAQRDIRYSIRRTSDKGQFFGITKKGGIYNDKELDREVYPWYNLTVEAKEVDLSGTPTGKESIVQVHIEVMDENDNAPEFAKPYEPKVCENAPQGKLVVQISATDKDITPRDVKFKFSLSTEDSNFTLIDNHDNTANIIVKYGYFDRERAKVHHLPVLISDNGRPSLTGTSTLHVTVCKCNEHGEFTLCEEAAAQVGISIQALVAIFLCILTFTVITLLIILRRRLRKQARAHGKSVPEIHEQLVTYDEEGGGEMDTTSYDVSVLNSARHGGAKPPRPALDARPSLYAQVQKPPRQAPGAHAPGEMAAMIGVKKDEADHDGGGPPYDTLHIYGYEGAESIAESLSSLGTDSSDSDIDYDFLNDWGTRFKMLAELYGSDPQEELVY.

An N-terminal signal peptide occupies residues 1 to 25 (MQALVMLLATGATYYLGLLAAAAAA). Residues 26–45 (VNPGRPNTPGSLPAHRRQKR) constitute a propeptide that is removed on maturation. Cadherin domains follow at residues 44-149 (KRDW…WPVF), 150-256 (THRV…FPIF), 257-371 (TQNR…PPIF), 372-478 (QQPF…APEF), and 478-585 (FAKP…GEFT). At 46–599 (DWIWNQMHID…AAAQVGISIQ (554 aa)) the chain is on the extracellular side. Ca(2+)-binding residues include glutamate 56 and glutamate 57. Residue asparagine 59 is glycosylated (N-linked (GlcNAc...) asparagine). Ca(2+)-binding residues include aspartate 107, glutamate 109, aspartate 141, valine 142, asparagine 143, aspartate 144, and asparagine 145. A glycan (N-linked (GlcNAc...) asparagine) is linked at asparagine 155. Ca(2+) is bound by residues aspartate 175, aspartate 177, histidine 184, and aspartate 229. 3 N-linked (GlcNAc...) asparagine glycosylation sites follow: asparagine 361, asparagine 441, and asparagine 523. Residues 600-620 (ALVAIFLCILTFTVITLLIIL) form a helical membrane-spanning segment. The required for interaction with PALS1 stretch occupies residues 621 to 660 (RRRLRKQARAHGKSVPEIHEQLVTYDEEGGGEMDTTSYDV). The Cytoplasmic segment spans residues 621–783 (RRRLRKQARA…GSDPQEELVY (163 aa)).

Part of a complex composed of AMOTL2, MAGI1 and CDH5, within the complex AMOTL2 acts as a scaffold protein for the interaction of MAGI1 with CDH5. The complex is required for coupling actin fibers to cell junctions in endothelial cells. Within the complex AMOTL2 (via its N-terminus) interacts with CDH5. Interacts (via cadherin 5 domain) with PTPRB. Interacts with TRPC4. Interacts with KRIT1. Interacts with PARD3. Interacts with RTN4 (isoform B). Interacts with PALS1; the interaction promotes PALS1 localization to cell junctions and is required for CDH5-mediated vascular lumen formation and endothelial cell. Interacts with CTNND1/p120-catenin; the interaction controls CADH5 endocytosis. In terms of processing, phosphorylated on tyrosine residues by KDR/VEGFR-2. Dephosphorylated by PTPRB. Post-translationally, O-glycosylated.

It is found in the cell junction. It localises to the adherens junction. Its subcellular location is the cell membrane. The protein resides in the cytoplasm. Functionally, cadherins are calcium-dependent cell adhesion proteins. They preferentially interact with themselves in a homophilic manner in connecting cells; cadherins may thus contribute to the sorting of heterogeneous cell types. This cadherin may play a important role in endothelial cell biology through control of the cohesion and organization of the intercellular junctions. It associates with alpha-catenin forming a link to the cytoskeleton. Plays a role in coupling actin fibers to cell junctions in endothelial cells, via acting as a cell junctional complex anchor for AMOTL2 and MAGI1. Acts in concert with KRIT1 and PALS1 to establish and maintain correct endothelial cell polarity and vascular lumen. These effects are mediated by recruitment and activation of the Par polarity complex and RAP1B. Required for activation of PRKCZ and for localization of phosphorylated PRKCZ, PARD3, TIAM1 and RAP1B to the cell junction. Associates with CTNND1/p120-catenin to control CADH5 endocytosis. In Bos taurus (Bovine), this protein is Cadherin-5.